A 304-amino-acid polypeptide reads, in one-letter code: Olfactory receptor 4K13 (304 aa).

The Extracellular portion of the chain corresponds to 1 to 25; that stretch reads MERANHSVVSEFILLGLSKSQNLQI. The N-linked (GlcNAc...) asparagine glycan is linked to Asn-5. Residues 26-49 form a helical membrane-spanning segment; it reads LFFLGFSVVFVGIVLGNLLILVTV. Residues 50–57 lie on the Cytoplasmic side of the membrane; the sequence is TFDSLLHT. The helical transmembrane segment at 58-79 threads the bilayer; that stretch reads PMYFLLSNLSCIDMILASFATP. The Extracellular segment spans residues 80 to 100; that stretch reads KMIVDFLRERKTISWWGCYSQ. The cysteines at positions 97 and 189 are disulfide-linked. The helical transmembrane segment at 101-120 threads the bilayer; sequence MFFMHLLGGSEMMLLVAMAI. Topologically, residues 121–139 are cytoplasmic; that stretch reads DRYVAICKPLHYMTIMSPR. A helical transmembrane segment spans residues 140–158; the sequence is VLTGLLLSSYAVGFVHSSS. Residues 159–195 lie on the Extracellular side of the membrane; sequence QMAFMLTLPFCGPNVIDSFFCDLPLVIKLACKDTYIL. The helical transmembrane segment at 196–219 threads the bilayer; it reads QLLVIADSGLLSLVCFLLLLVSYG. At 220-235 the chain is on the cytoplasmic side; the sequence is VIIFSVRYRAASRSSK. A helical membrane pass occupies residues 236–258; that stretch reads AFSTLSAHITVVTLFFAPCVFIY. The Extracellular portion of the chain corresponds to 259-269; it reads VWPFSRYSVDK. Residues 270–289 form a helical membrane-spanning segment; it reads ILSVFYTIFTPLLNPIIYTL. Topologically, residues 290–304 are cytoplasmic; that stretch reads RNQEVKAAIKKRLCI.

It belongs to the G-protein coupled receptor 1 family.

The protein resides in the cell membrane. Functionally, odorant receptor. The protein is Olfactory receptor 4K13 (OR4K13) of Homo sapiens (Human).